The primary structure comprises 21 residues: Hydroxypicolinic acid-activating enzyme (21 aa).

Functionally, involved in etamycin biosynthesis. The chain is Hydroxypicolinic acid-activating enzyme from Streptomyces griseoviridis.